The primary structure comprises 76 residues: Tautomerase PptA (76 aa).

The Proton acceptor; via imino nitrogen role is filled by Pro-2.

It belongs to the 4-oxalocrotonate tautomerase family. PptA subfamily. In terms of assembly, homodimer.

The protein localises to the cytoplasm. The protein is Tautomerase PptA of Cronobacter sakazakii (strain ATCC BAA-894) (Enterobacter sakazakii).